Consider the following 485-residue polypeptide: Poly(ADP-ribose) glycohydrolase 2 (485 aa).

The protein belongs to the poly(ADP-ribose) glycohydrolase family. Expressed in head and tail neurons.

It localises to the cytoplasm. It carries out the reaction [(1''-&gt;2')-ADP-alpha-D-ribose](n) + H2O = [(1''-&gt;2')-ADP-alpha-D-ribose](n-1) + ADP-D-ribose. Poly(ADP-ribose) synthesized after DNA damage is only present transiently and is rapidly degraded by poly(ADP-ribose) glycohydrolase. Poly(ADP-ribose) metabolism may be required for maintenance of the normal function of neuronal cells. This Caenorhabditis elegans protein is Poly(ADP-ribose) glycohydrolase 2.